The following is a 485-amino-acid chain: uncharacterized protein (485 aa).

The next 11 helical transmembrane spans lie at 79-99 (LVTL…LIFA), 117-137 (VFAL…FLVF), 139-159 (FFSG…LADL), 170-190 (VIYF…SGFI), 199-219 (WEFW…FLLL), 275-295 (ILIC…LVLI), 313-333 (GLMY…AMPI), 355-375 (LPMG…FGWT), 380-400 (IFWF…IMTS), 421-441 (GVKI…ESLF), and 448-468 (WGCT…PILF).

Belongs to the major facilitator superfamily. CAR1 family.

Its subcellular location is the membrane. This is an uncharacterized protein from Schizosaccharomyces pombe (strain 972 / ATCC 24843) (Fission yeast).